The following is a 188-amino-acid chain: Probable thiol:disulfide interchange protein DsbE-2 (188 aa).

At 1 to 11 (MSMLHQQKRKN) the chain is on the cytoplasmic side. The chain crosses the membrane as a helical span at residues 12-32 (HFVFLPLVILLAVCALLFIGL). The Periplasmic segment spans residues 33 to 188 (QQDPQKIASA…KLEAENAKVR (156 aa)). The 138-residue stretch at 42 to 179 (ALIGKPVPTF…QEMFIPEWQK (138 aa)) folds into the Thioredoxin domain. Residues Cys82 and Cys85 are joined by a disulfide bond.

The protein belongs to the thioredoxin family. DsbE subfamily.

The protein localises to the cell inner membrane. Functionally, could be involved in disulfide bond formation. Could catalyzes a late, reductive step in the assembly of periplasmic NrfA c-type cytochrome, probably the reduction of disulfide bonds of the apocytochrome c to allow covalent linkage with the heme. Possible subunit of a heme lyase. The chain is Probable thiol:disulfide interchange protein DsbE-2 (nrfX) from Pasteurella multocida (strain Pm70).